We begin with the raw amino-acid sequence, 319 residues long: tRNA uridine(34) hydroxylase (319 aa).

In terms of domain architecture, Rhodanese spans 127–221 (KQEDTVIIDA…YGKDPEVQGE (95 aa)). Residue Cys-181 is the Cysteine persulfide intermediate of the active site.

The protein belongs to the TrhO family.

It catalyses the reaction uridine(34) in tRNA + AH2 + O2 = 5-hydroxyuridine(34) in tRNA + A + H2O. Functionally, catalyzes oxygen-dependent 5-hydroxyuridine (ho5U) modification at position 34 in tRNAs. The protein is tRNA uridine(34) hydroxylase of Bacillus cereus (strain ZK / E33L).